The sequence spans 259 residues: Hydroxyethylthiazole kinase (259 aa).

M38 contacts substrate. ATP contacts are provided by R113 and S158. Substrate is bound at residue G185.

This sequence belongs to the Thz kinase family. Requires Mg(2+) as cofactor.

It catalyses the reaction 5-(2-hydroxyethyl)-4-methylthiazole + ATP = 4-methyl-5-(2-phosphooxyethyl)-thiazole + ADP + H(+). The protein operates within cofactor biosynthesis; thiamine diphosphate biosynthesis; 4-methyl-5-(2-phosphoethyl)-thiazole from 5-(2-hydroxyethyl)-4-methylthiazole: step 1/1. Functionally, catalyzes the phosphorylation of the hydroxyl group of 4-methyl-5-beta-hydroxyethylthiazole (THZ). In Leuconostoc citreum (strain KM20), this protein is Hydroxyethylthiazole kinase.